The chain runs to 399 residues: Fructose-bisphosphate aldolase 1, chloroplastic (399 aa).

Residues M1 to A48 constitute a chloroplast transit peptide. Position 96 (R96) interacts with substrate. Position 158 is a phosphoserine (S158). K186 contacts substrate. S216 is modified (phosphoserine). The active-site Proton acceptor is E226. Catalysis depends on K268, which acts as the Schiff-base intermediate with dihydroxyacetone-P. S310–G312 contacts substrate. K395 bears the N6,N6,N6-trimethyllysine mark.

This sequence belongs to the class I fructose-bisphosphate aldolase family. In terms of assembly, homotetramer. Post-translationally, can be trimethylated at Lys-395 by LSMT-L, but the trimethylation has no effect in vitro on the kinetic properties of the enzyme. S-glutathionylated. In terms of tissue distribution, highly expressed in rosettes leaves and cauline leaves.

Its subcellular location is the plastid. The protein resides in the chloroplast. It is found in the plastoglobule. The protein localises to the chloroplast stroma. It carries out the reaction beta-D-fructose 1,6-bisphosphate = D-glyceraldehyde 3-phosphate + dihydroxyacetone phosphate. It functions in the pathway carbohydrate degradation; glycolysis; D-glyceraldehyde 3-phosphate and glycerone phosphate from D-glucose: step 4/4. Functionally, plays a key role in glycolysis and gluconeogenesis. In Arabidopsis thaliana (Mouse-ear cress), this protein is Fructose-bisphosphate aldolase 1, chloroplastic.